Reading from the N-terminus, the 266-residue chain is N-formylglutamate deformylase (266 aa).

Belongs to the N-formylglutamate deformylase family. In terms of assembly, monomer.

It carries out the reaction N-formyl-L-glutamate + H2O = formate + L-glutamate. Its pathway is amino-acid degradation; L-histidine degradation into L-glutamate; L-glutamate from N-formimidoyl-L-glutamate (deiminase route): step 2/2. Functionally, catalyzes the hydrolysis of N-formyl-L-glutamate to formate and L-glutamate. Shows weak activity with N-formyl-L-glutamine. The chain is N-formylglutamate deformylase from Pseudomonas aeruginosa (strain ATCC 15692 / DSM 22644 / CIP 104116 / JCM 14847 / LMG 12228 / 1C / PRS 101 / PAO1).